Here is a 118-residue protein sequence, read N- to C-terminus: V-type proton ATPase subunit G 2 (118 aa).

The stretch at 8–57 forms a coiled coil; it reads IQQLLQAEKRAAEKVADARKRKARRLKQAKEEAQMEVDQYRREREQEFQS. The segment at 25 to 90 is disordered; the sequence is ARKRKARRLK…VQGMQSSQQR (66 aa). A compositionally biased stretch (basic and acidic residues) spans 35 to 55; that stretch reads QAKEEAQMEVDQYRREREQEF. Composition is skewed to polar residues over residues 56-69 and 78-89; these read QSKQQAAMGSQGNL and RRQVQGMQSSQQ.

It belongs to the V-ATPase G subunit family. V-ATPase is a heteromultimeric enzyme made up of two complexes: the ATP-hydrolytic V1 complex and the proton translocation V0 complex. The V1 complex consists of three catalytic AB heterodimers that form a heterohexamer, three peripheral stalks each consisting of EG heterodimers, one central rotor including subunits D and F, and the regulatory subunits C and H. The proton translocation complex V0 consists of the proton transport subunit a, a ring of proteolipid subunits c9c'', rotary subunit d, subunits e and f, and the accessory subunits ATP6AP1/Ac45 and ATP6AP2/PRR. In terms of tissue distribution, expressed in brain (at protein level).

It localises to the melanosome. The protein localises to the cytoplasmic vesicle. The protein resides in the clathrin-coated vesicle membrane. Subunit of the V1 complex of vacuolar(H+)-ATPase (V-ATPase), a multisubunit enzyme composed of a peripheral complex (V1) that hydrolyzes ATP and a membrane integral complex (V0) that translocates protons. V-ATPase is responsible for acidifying and maintaining the pH of intracellular compartments and in some cell types, is targeted to the plasma membrane, where it is responsible for acidifying the extracellular environment. This Bos taurus (Bovine) protein is V-type proton ATPase subunit G 2.